A 234-amino-acid chain; its full sequence is Sugar fermentation stimulation protein A (234 aa).

The segment at residues 201 to 220 is a DNA-binding region (H-T-H motif); it reads LLSEAQQRGVEILAYKAEIS.

This sequence belongs to the SfsA family.

Functionally, binds to DNA non-specifically. Could be a regulatory factor involved in maltose metabolism. This chain is Sugar fermentation stimulation protein A, found in Shigella sonnei (strain Ss046).